The chain runs to 130 residues: Small ribosomal subunit protein uS11 (130 aa).

It belongs to the universal ribosomal protein uS11 family. As to quaternary structure, part of the 30S ribosomal subunit. Interacts with proteins S7 and S18. Binds to IF-3.

Its function is as follows. Located on the platform of the 30S subunit, it bridges several disparate RNA helices of the 16S rRNA. Forms part of the Shine-Dalgarno cleft in the 70S ribosome. This Bdellovibrio bacteriovorus (strain ATCC 15356 / DSM 50701 / NCIMB 9529 / HD100) protein is Small ribosomal subunit protein uS11.